Here is a 209-residue protein sequence, read N- to C-terminus: Ribosomal RNA small subunit methyltransferase G (209 aa).

Residues Gly77, Met82, 128 to 129 (VE), and Arg143 each bind S-adenosyl-L-methionine.

The protein belongs to the methyltransferase superfamily. RNA methyltransferase RsmG family.

Its subcellular location is the cytoplasm. The catalysed reaction is guanosine(527) in 16S rRNA + S-adenosyl-L-methionine = N(7)-methylguanosine(527) in 16S rRNA + S-adenosyl-L-homocysteine. Functionally, specifically methylates the N7 position of guanine in position 527 of 16S rRNA. This Chromobacterium violaceum (strain ATCC 12472 / DSM 30191 / JCM 1249 / CCUG 213 / NBRC 12614 / NCIMB 9131 / NCTC 9757 / MK) protein is Ribosomal RNA small subunit methyltransferase G.